A 969-amino-acid chain; its full sequence is Putative zinc protease mug138 (969 aa).

A Zn(2+)-binding site is contributed by histidine 68. Glutamate 71 serves as the catalytic Proton acceptor. Residues histidine 72 and glutamate 149 each contribute to the Zn(2+) site.

This sequence belongs to the peptidase M16 family.

Its subcellular location is the cytoplasm. Its function is as follows. Has a role in meiosis. The chain is Putative zinc protease mug138 (mug138) from Schizosaccharomyces pombe (strain 972 / ATCC 24843) (Fission yeast).